Reading from the N-terminus, the 417-residue chain is D-amino acid dehydrogenase (417 aa).

Position 3-17 (3-17 (IVVLGGGVVGVTSAW)) interacts with FAD.

This sequence belongs to the DadA oxidoreductase family. The cofactor is FAD.

It carries out the reaction a D-alpha-amino acid + A + H2O = a 2-oxocarboxylate + AH2 + NH4(+). Its pathway is amino-acid degradation; D-alanine degradation; NH(3) and pyruvate from D-alanine: step 1/1. Functionally, oxidative deamination of D-amino acids. The protein is D-amino acid dehydrogenase of Aeromonas hydrophila subsp. hydrophila (strain ATCC 7966 / DSM 30187 / BCRC 13018 / CCUG 14551 / JCM 1027 / KCTC 2358 / NCIMB 9240 / NCTC 8049).